A 1357-amino-acid chain; its full sequence is Vascular endothelial growth factor receptor 2 (1357 aa).

The signal sequence occupies residues 1–22; sequence MAKTSYALLLLDILLTFNVAKA. Residues 23–774 are Extracellular-facing; that stretch reads IELRFVPDPP…GAEEKMNVEL (752 aa). Ig-like C2-type domains follow at residues 32 to 120, 120 to 222, 216 to 330, 335 to 426, 433 to 553, 556 to 667, and 676 to 762; these read PTLN…SVAV, VYVF…VAVV, PYIV…ASLI, PFIA…RTFQ, PRIF…VIVF, TRFL…LLHN, and SRIV…ARIS. N-linked (GlcNAc...) asparagine glycans are attached at residues asparagine 35, asparagine 44, asparagine 66, asparagine 97, asparagine 161, asparagine 209, asparagine 247, asparagine 272, asparagine 303, asparagine 307, asparagine 407, asparagine 501, asparagine 560, asparagine 621, asparagine 631, asparagine 640, asparagine 681, asparagine 688, and asparagine 713. Intrachain disulfides connect cysteine 53–cysteine 104 and cysteine 153–cysteine 203. Cysteine 248 and cysteine 314 are oxidised to a cystine. Cysteine 457 and cysteine 538 are joined by a disulfide. Cysteines 579 and 651 form a disulfide. Residues cysteine 697 and cysteine 746 are joined by a disulfide bond. A helical transmembrane segment spans residues 775-795; that stretch reads IMPIGAVVIAMFLWLLIVFVI. Over 796-1357 the chain is Cytoplasmic; sequence RNRKRPNDGD…AEVRYSAPPV (562 aa). The Protein kinase domain occupies 843-1173; that stretch reads LKLGEPLGRG…FTQLVEHLGN (331 aa). ATP contacts are provided by residues 849–857 and lysine 877; that span reads LGRGAFGQV. Residues 944 to 975 form a disordered region; the sequence is YSPYKKRTPRMPNRREVQQDEDPREGDLGLGT. Aspartate 1039 acts as the Proton acceptor in catalysis. Phosphotyrosine; by autocatalysis occurs at positions 1065, 1070, 1186, and 1222. Residues 1296 to 1357 are disordered; it reads SLASESSNQT…AEVRYSAPPV (62 aa). The segment covering 1298-1312 has biased composition (polar residues); sequence ASESSNQTSGYQSGY.

The protein belongs to the protein kinase superfamily. Tyr protein kinase family. CSF-1/PDGF receptor subfamily. Interacts with isoform VEGF165 of vegfaa and, to a lesser extent, with isoform VEGF171 of vegfab. Interacts (via juxtamembrane region) with chaperone pdcl3 (via thioredoxin fold region); the interaction leads to increased vegfr2 abundance through inhibition of its ubiquitination and degradation. First expressed in embryos between 5- and 7-somites in the bilateral stripes that contain the developing angioblasts, and then localized to the intermediate cell mass (ICM) and the developing vasculature. By 30 hpf, expressed in the major trunk, head and intersomitic vessels, persisting through 4 dpf when expression is seen in developing subintestinal veins and in the remaining vasculature.

The protein resides in the cell membrane. It is found in the cytoplasm. Its subcellular location is the nucleus. It localises to the cytoplasmic vesicle. The protein localises to the early endosome. The protein resides in the cell junction. It is found in the endoplasmic reticulum. It carries out the reaction L-tyrosyl-[protein] + ATP = O-phospho-L-tyrosyl-[protein] + ADP + H(+). Receptor for VEGF or VEGFC. Has a tyrosine-protein kinase activity. Combinations of multiple VEGF receptors are required for development of different blood vessel types in the embryo. Involved in angiogenesis, specifically in VEGF-induced sprouting of new blood vessels. Particularly involved in artery formation. Does not appear to be required for hematopoiesis. The protein is Vascular endothelial growth factor receptor 2 of Danio rerio (Zebrafish).